We begin with the raw amino-acid sequence, 72 residues long: Hypotensin (72 aa).

The first 24 residues, 1–24 (MKMMIAVFVSILLLMFSLSSTAMG), serve as a signal peptide directing secretion. Propeptides lie at residues 25–35 (METEQQNMEER) and 61–72 (RFDPATFGENED).

It belongs to the non-disulfide-bridged peptide (NDBP) superfamily. In terms of tissue distribution, expressed by the venom gland.

It is found in the secreted. Potentiates the hypotensive action of bradykinin (BK) in normotensive rats, and induces a vasorelaxant effect in mesenteric artery rings that is induced by endothelium-dependent release of nitric oxide (NO). Does not inhibit angiotensin converting enzyme (ACE). Shows neither hemolytic activity nor cytotoxicity to normal and cancer cells. Shows moderate antimicrobial activity against the fungi Candida albicans and the filamentous fungus Trichophyton rubrum, as well as against the bacteria C.albicans (MIC=128 ug/mL), C.tropicalis (MIC=128 ug/mL) and Aspergillus flavus (MIC=128 ug/mL). Has no antimicrobial activity against S.aureus, S.epidermidis and P.aeruginosa. This Tityus stigmurus (Brazilian scorpion) protein is Hypotensin.